Reading from the N-terminus, the 322-residue chain is Phosphatidylserine decarboxylase proenzyme (322 aa).

Active-site charge relay system; for autoendoproteolytic cleavage activity residues include aspartate 90, histidine 147, and serine 254. Serine 254 serves as the catalytic Schiff-base intermediate with substrate; via pyruvic acid; for decarboxylase activity. The residue at position 254 (serine 254) is a Pyruvic acid (Ser); by autocatalysis. Residues 290–322 (FVTPDSEPAPLPAEEIEAEHDASPLVDDKKDQV) are disordered. The span at 308–322 (EHDASPLVDDKKDQV) shows a compositional bias: basic and acidic residues.

This sequence belongs to the phosphatidylserine decarboxylase family. PSD-B subfamily. Prokaryotic type I sub-subfamily. As to quaternary structure, heterodimer of a large membrane-associated beta subunit and a small pyruvoyl-containing alpha subunit. Requires pyruvate as cofactor. In terms of processing, is synthesized initially as an inactive proenzyme. Formation of the active enzyme involves a self-maturation process in which the active site pyruvoyl group is generated from an internal serine residue via an autocatalytic post-translational modification. Two non-identical subunits are generated from the proenzyme in this reaction, and the pyruvate is formed at the N-terminus of the alpha chain, which is derived from the carboxyl end of the proenzyme. The autoendoproteolytic cleavage occurs by a canonical serine protease mechanism, in which the side chain hydroxyl group of the serine supplies its oxygen atom to form the C-terminus of the beta chain, while the remainder of the serine residue undergoes an oxidative deamination to produce ammonia and the pyruvoyl prosthetic group on the alpha chain. During this reaction, the Ser that is part of the protease active site of the proenzyme becomes the pyruvoyl prosthetic group, which constitutes an essential element of the active site of the mature decarboxylase.

Its subcellular location is the cell membrane. It carries out the reaction a 1,2-diacyl-sn-glycero-3-phospho-L-serine + H(+) = a 1,2-diacyl-sn-glycero-3-phosphoethanolamine + CO2. It participates in phospholipid metabolism; phosphatidylethanolamine biosynthesis; phosphatidylethanolamine from CDP-diacylglycerol: step 2/2. Its function is as follows. Catalyzes the formation of phosphatidylethanolamine (PtdEtn) from phosphatidylserine (PtdSer). The chain is Phosphatidylserine decarboxylase proenzyme from Escherichia fergusonii (strain ATCC 35469 / DSM 13698 / CCUG 18766 / IAM 14443 / JCM 21226 / LMG 7866 / NBRC 102419 / NCTC 12128 / CDC 0568-73).